The chain runs to 164 residues: Protein-export protein SecB (164 aa).

The protein belongs to the SecB family. Homotetramer, a dimer of dimers. One homotetramer interacts with 1 SecA dimer.

The protein resides in the cytoplasm. In terms of biological role, one of the proteins required for the normal export of preproteins out of the cell cytoplasm. It is a molecular chaperone that binds to a subset of precursor proteins, maintaining them in a translocation-competent state. It also specifically binds to its receptor SecA. In Ruegeria sp. (strain TM1040) (Silicibacter sp.), this protein is Protein-export protein SecB.